The chain runs to 678 residues: Chloride channel protein ClC-Kb (678 aa).

Over 1–50 (MEELVGLREGSSGNPVALRELWSPCPRLRRGIRGGLEWLKQKLFRVGEDW) the chain is Cytoplasmic. Helical transmembrane passes span 51 to 82 (YFLM…KWLY) and 91 to 111 (LRYL…SGFS). The helical intramembrane region spans 116 to 127 (PFSGGSGIPELK). Serine 121 serves as a coordination point for chloride. Transmembrane regions (helical) follow at residues 141-160 (IKNF…TGST) and 161-180 (LFLG…AAYL). Residues 203–224 (AGAAVGVATVFAAPFSGVLFCI) constitute an intramembrane region (helical). A helical transmembrane segment spans residues 236–255 (YWRGFFAATCGAFMFRLLAV). Glutamate 259, glutamate 261, aspartate 278, and glutamate 281 together coordinate Ca(2+). Helical transmembrane passes span 282-310 (IFFF…LAFT) and 325-342 (PLYA…TYPP). The segment at residues 349-360 (ASRLSMREHLDT) is an intramembrane region (helical). A glycan (N-linked (GlcNAc...) asparagine) is linked at asparagine 364. The next 2 helical transmembrane spans lie at 400-420 (GTLA…TTIP) and 421-440 (MPAG…GRLL). Chloride is bound at residue phenylalanine 426. Positions 464–496 (GGYALAGAAAFSGAVTHSISTALLAFELTGQIV) form an intramembrane region, helical. The chain crosses the membrane as a helical span at residues 500–520 (PVLMAVLAANAIAQSCQPSFY). The Cytoplasmic segment spans residues 521–678 (DGTIMVKKLP…SWVERQHTGF (158 aa)). CBS domains follow at residues 551–612 (MRRA…ARAS) and 620–678 (DILA…HTGF).

This sequence belongs to the chloride channel (TC 2.A.49) family. CLCNKB subfamily. Homodimer. Interacts with BSND. N-glycosylated. In terms of tissue distribution, expressed predominantly in the kidney.

Its subcellular location is the basolateral cell membrane. It catalyses the reaction chloride(in) = chloride(out). The enzyme catalyses iodide(out) = iodide(in). It carries out the reaction nitrate(in) = nitrate(out). The catalysed reaction is bromide(in) = bromide(out). Its function is as follows. Anion-selective channel permeable to small monovalent anions with ion selectivity for chloride &gt; bromide &gt; nitrate &gt; iodide. Forms a homodimeric channel where each subunit has its own ion conduction pathway. May conduct double-barreled currents controlled by two types of gates, two fast gates that control each subunit independently and a slow common gate that opens and shuts off both subunits simultaneously. Assembles with the regulatory subunit BSND/Barttin for sorting at the basolateral plasma membrane domain and functional switch to the ion conducting state. CLCNKB:BSND channels display mostly a linear current-voltage relationship controlled by common gate. Mediates chloride conductance along nephron segments, namely the thick ascending limb of Henle's loop, convoluted tubule and the collecting duct, contributing to the maintenance of systemic acid-base and electrolyte homeostasis. Conducts chloride currents in the stria vascularis of the inner ear to establish the endocochlear potential necessary for normal hearing. In Oryctolagus cuniculus (Rabbit), this protein is Chloride channel protein ClC-Kb (CLCNKB).